Here is a 1987-residue protein sequence, read N- to C-terminus: Transcriptional activator DEMETER (1987 aa).

Disordered regions lie at residues 246 to 378, 392 to 415, and 793 to 901; these read TGHE…NKSP, DLENPGDARQGDSESEIVQNSSGA, and MPPE…GPSG. Residues 258–277 show a composition bias toward polar residues; sequence SMQSIMDSSAVNATEATEQN. The segment covering 341–364 has biased composition (basic and acidic residues); it reads ATQEKVKSKETGSAKKKNLKESAT. Residues 813 to 829 are compositionally biased toward polar residues; it reads NTASISKGASKGNSSPV. Residues 844 to 855 are compositionally biased toward basic residues; that stretch reads PAKKGRAGRKKS. A DEMETER region spans residues 955–1054; sequence KVDIDDETTR…AFMSLAARFP (100 aa). Disordered regions lie at residues 1324 to 1351 and 1439 to 1471; these read LPGMGLSGSSSAVQEHQDDTQHNQQDEM and TLADGKKPTSQWDSLRKDVEGNEGRQERNKNNM. 2 stretches are compositionally biased toward basic and acidic residues: residues 1338–1351 and 1452–1469; these read EHQDDTQHNQQDEM and SLRKDVEGNEGRQERNKN. 4 residues coordinate [4Fe-4S] cluster: Cys1629, Cys1636, Cys1639, and Cys1645.

It belongs to the DNA glycosylase family. DEMETER subfamily. Requires [4Fe-4S] cluster as cofactor. As to expression, mainly expressed in immature flower buds, then decreases as the flower matures. Expressed in the ovule carpels, but not expressed in pollen stamens. Expressed in developing and mature ovules (stages 12-14), then strongly decreases after fertilization.

Its subcellular location is the nucleus. Its function is as follows. Transcriptional activator involved in gene imprinting. Catalyzes the release of 5-methylcytosine (5-meC) from DNA by a glycosylase/lyase mechanism. Allows the expression of the maternal copy of the imprinted MEA gene before fertilization, possibly by antagonizing or suppressing DNA methylation on target promoter. Probably acts by nicking the MEA promoter. Required for stable reproducible patterns of floral and vegetative development. The sequence is that of Transcriptional activator DEMETER (DME) from Arabidopsis thaliana (Mouse-ear cress).